A 317-amino-acid chain; its full sequence is 2,3,4,5-tetrahydropyridine-2,6-dicarboxylate N-succinyltransferase (317 aa).

Asp-166 and Glu-183 together coordinate Mg(2+). The Acyl-anhydride intermediate role is filled by Glu-199. Succinyl-CoA is bound by residues Arg-201, Gly-216, Ser-219, Ala-242, 257 to 258 (EA), Gly-265, Lys-277, and 290 to 293 (RRNS).

It belongs to the type 2 tetrahydrodipicolinate N-succinyltransferase family. In terms of assembly, homotrimer.

Its subcellular location is the cytoplasm. The enzyme catalyses (S)-2,3,4,5-tetrahydrodipicolinate + succinyl-CoA + H2O = (S)-2-succinylamino-6-oxoheptanedioate + CoA. Its pathway is amino-acid biosynthesis; L-lysine biosynthesis via DAP pathway; LL-2,6-diaminopimelate from (S)-tetrahydrodipicolinate (succinylase route): step 1/3. In terms of biological role, catalyzes the conversion of the cyclic tetrahydrodipicolinate (THDP) into the acyclic N-succinyl-L-2-amino-6-oxopimelate using succinyl-CoA. The protein is 2,3,4,5-tetrahydropyridine-2,6-dicarboxylate N-succinyltransferase (dapD) of Mycobacterium tuberculosis (strain CDC 1551 / Oshkosh).